We begin with the raw amino-acid sequence, 365 residues long: Alanine racemase (365 aa).

Lys35 functions as the Proton acceptor; specific for D-alanine in the catalytic mechanism. Residue Lys35 is modified to N6-(pyridoxal phosphate)lysine. Arg130 is a binding site for substrate. Tyr256 acts as the Proton acceptor; specific for L-alanine in catalysis. Met304 lines the substrate pocket.

It belongs to the alanine racemase family. The cofactor is pyridoxal 5'-phosphate.

It catalyses the reaction L-alanine = D-alanine. Its pathway is amino-acid biosynthesis; D-alanine biosynthesis; D-alanine from L-alanine: step 1/1. Its function is as follows. Catalyzes the interconversion of L-alanine and D-alanine. May also act on other amino acids. In Polaromonas naphthalenivorans (strain CJ2), this protein is Alanine racemase (alr).